The primary structure comprises 351 residues: DNA polymerase IV (351 aa).

The UmuC domain occupies 4–185 (IIHVDMDCFF…LPLAKIPGVG (182 aa)). Mg(2+) is bound by residues aspartate 8 and aspartate 103. The active site involves glutamate 104.

The protein belongs to the DNA polymerase type-Y family. Monomer. Mg(2+) is required as a cofactor.

Its subcellular location is the cytoplasm. It carries out the reaction DNA(n) + a 2'-deoxyribonucleoside 5'-triphosphate = DNA(n+1) + diphosphate. In terms of biological role, poorly processive, error-prone DNA polymerase involved in untargeted mutagenesis. Copies undamaged DNA at stalled replication forks, which arise in vivo from mismatched or misaligned primer ends. These misaligned primers can be extended by PolIV. Exhibits no 3'-5' exonuclease (proofreading) activity. May be involved in translesional synthesis, in conjunction with the beta clamp from PolIII. This is DNA polymerase IV from Shigella dysenteriae serotype 1 (strain Sd197).